A 243-amino-acid chain; its full sequence is DNA repair protein RecO (243 aa).

It belongs to the RecO family.

Functionally, involved in DNA repair and RecF pathway recombination. The polypeptide is DNA repair protein RecO (Chlamydia trachomatis serovar L2 (strain ATCC VR-902B / DSM 19102 / 434/Bu)).